We begin with the raw amino-acid sequence, 427 residues long: MSVKWEKQEGNVGKLTFEIEQEKVKEGLDRAFVKVRKTLNVPGFRKGKVPRQIFNQRFGEEALYQDALDILLPEVYSAAIDEAGIDPVDTPQVNIESMEKGETWVLTAEVTVKPEVKLGDYKGLEVEKRETELTTEELEAELKQLQERQAELVVKEDAPAENGDTVILDFEGFKDGVAFEGGQAENHSLELGSGQFIPGFEEKLVGLKAGDEADIELTFPEEYHAEDLAGQPVVFKVKLHEIKTKEVPALDDELAKDIDEEVETLDELKEKISKRLQEAKEESVAQAKQEEVIAKAVENAEVDIPHAMVHHEADHLMNHFAQDLQAQGLTPELYYQFTGQTEEAMHAQMEKDAEKRVKMNLVLEAIAEAENIEPTEEAIDEEISTLAEKYGMEKDAVRAALGDMSELKSDLKIRKAIDVLLDSAVEK.

One can recognise a PPIase FKBP-type domain in the interval 163–248 (GDTVILDFEG…LHEIKTKEVP (86 aa)).

Belongs to the FKBP-type PPIase family. Tig subfamily.

The protein resides in the cytoplasm. It catalyses the reaction [protein]-peptidylproline (omega=180) = [protein]-peptidylproline (omega=0). In terms of biological role, involved in protein export. Acts as a chaperone by maintaining the newly synthesized protein in an open conformation. Functions as a peptidyl-prolyl cis-trans isomerase. This is Trigger factor from Listeria monocytogenes serotype 4a (strain HCC23).